We begin with the raw amino-acid sequence, 98 residues long: Defensin-A (98 aa).

The first 18 residues, 1 to 18, serve as a signal peptide directing secretion; it reads MKSITVICFLALCTVAIT. The propeptide occupies 19-58; sequence SAYPQEPVLADEARPFANSLFDELPEETYQAAVENFRLKR. Disulfide bonds link cysteine 61–cysteine 88, cysteine 74–cysteine 94, and cysteine 78–cysteine 96.

It belongs to the invertebrate defensin family. Type 1 subfamily.

It localises to the secreted. Functionally, antibacterial peptide mostly active against Gram-positive bacteria. Has activity against the bacteria Gram-negative E.cloacae beta12. The protein is Defensin-A (DEFA) of Aedes aegypti (Yellowfever mosquito).